The following is a 218-amino-acid chain: Cytochrome b6 (218 aa).

A helical membrane pass occupies residues 35–55 (IFYCLGGITLVCFLVQFATGF). A heme c-binding site is contributed by Cys-38. His-89 and His-103 together coordinate heme b. The next 3 helical transmembrane spans lie at 93 to 113 (ASMM…TGGF), 119 to 139 (LTWV…VTGY), and 189 to 209 (LHTF…FLMI). Heme b is bound by residues His-190 and His-205.

It belongs to the cytochrome b family. PetB subfamily. As to quaternary structure, the 4 large subunits of the cytochrome b6-f complex are cytochrome b6, subunit IV (17 kDa polypeptide, PetD), cytochrome f and the Rieske protein, while the 4 small subunits are PetG, PetL, PetM and PetN. The complex functions as a dimer. It depends on heme b as a cofactor. Requires heme c as cofactor.

It is found in the cellular thylakoid membrane. Its function is as follows. Component of the cytochrome b6-f complex, which mediates electron transfer between photosystem II (PSII) and photosystem I (PSI), cyclic electron flow around PSI, and state transitions. The sequence is that of Cytochrome b6 from Prochlorococcus marinus (strain MIT 9303).